A 497-amino-acid polypeptide reads, in one-letter code: Putative glucuronosyltransferase PGSIP8 (497 aa).

A helical membrane pass occupies residues 3–23 (LQRGFVFLSLVLSFMIIETTA). 2 residues coordinate Mn(2+): Asp-165 and Asp-167. A run of 5 helical transmembrane segments spans residues 319-339 (YSAEMPLVIIQAMFYLGIIVV), 365-385 (GFKLIALLSVVAAYIFPFFTI), 388-408 (TIHPLIGWSLYLMASFALSSI), 418-438 (LPVLTPWLGILGTLLVMAFPW), and 442-462 (GVVRALSVFAYAFCCAPFVWV).

It belongs to the glycosyltransferase 8 family. Glycogenin subfamily. It depends on Mn(2+) as a cofactor.

The protein localises to the membrane. The protein is Putative glucuronosyltransferase PGSIP8 (PGSIP8) of Arabidopsis thaliana (Mouse-ear cress).